Reading from the N-terminus, the 87-residue chain is Large ribosomal subunit protein eL34 (87 aa).

This sequence belongs to the eukaryotic ribosomal protein eL34 family.

The chain is Large ribosomal subunit protein eL34 from Sulfurisphaera tokodaii (strain DSM 16993 / JCM 10545 / NBRC 100140 / 7) (Sulfolobus tokodaii).